Here is a 142-residue protein sequence, read N- to C-terminus: Small ribosomal subunit protein bS18c (142 aa).

The tract at residues 1-21 (MDRITGPFRKSKKSFRKPLPP) is disordered.

The protein belongs to the bacterial ribosomal protein bS18 family. Part of the 30S ribosomal subunit.

Its subcellular location is the plastid. In Cuscuta gronovii (Common dodder), this protein is Small ribosomal subunit protein bS18c.